The chain runs to 267 residues: 3-methyl-2-oxobutanoate hydroxymethyltransferase (267 aa).

Mg(2+) is bound by residues aspartate 46 and aspartate 85. 3-methyl-2-oxobutanoate is bound by residues 46 to 47, aspartate 85, and lysine 115; that span reads DS. Position 117 (glutamate 117) interacts with Mg(2+). Glutamate 184 acts as the Proton acceptor in catalysis.

Belongs to the PanB family. In terms of assembly, homodecamer; pentamer of dimers. The cofactor is Mg(2+).

It localises to the cytoplasm. It carries out the reaction 3-methyl-2-oxobutanoate + (6R)-5,10-methylene-5,6,7,8-tetrahydrofolate + H2O = 2-dehydropantoate + (6S)-5,6,7,8-tetrahydrofolate. It participates in cofactor biosynthesis; (R)-pantothenate biosynthesis; (R)-pantoate from 3-methyl-2-oxobutanoate: step 1/2. Functionally, catalyzes the reversible reaction in which hydroxymethyl group from 5,10-methylenetetrahydrofolate is transferred onto alpha-ketoisovalerate to form ketopantoate. This is 3-methyl-2-oxobutanoate hydroxymethyltransferase from Citrifermentans bemidjiense (strain ATCC BAA-1014 / DSM 16622 / JCM 12645 / Bem) (Geobacter bemidjiensis).